Consider the following 1755-residue polypeptide: Transposon Ty1-LR2 Gag-Pol polyprotein (1755 aa).

Composition is skewed to polar residues over residues 1 to 23 (MESQ…SVTS), 48 to 60 (TKAN…TPAS), and 127 to 152 (QSQF…GNTF). 3 disordered regions span residues 1–93 (MESQ…MMTQ), 126–174 (PQSQ…PPPM), and 352–421 (GSRN…SKST). The span at 153–165 (TDSSSADSDMTST) shows a compositional bias: low complexity. An RNA-binding region spans residues 299-401 (NNGIHINNKV…NSKSKTARAH (103 aa)). Positions 402 to 418 (NVSTSNNSPSTDNDSIS) are enriched in low complexity. Phosphoserine is present on Ser-416. Asp-461 serves as the catalytic For protease activity; shared with dimeric partner. The interval 583-640 (NVHTSESTRKYPYPFIHRMLAHANAPTIRYSLKNNTITYFNESDVDWSSAIDYQCPDC) is integrase-type zinc finger-like. The 176-residue stretch at 660–835 (NSYEPFQYLH…AGLDISTLLP (176 aa)) folds into the Integrase catalytic domain. Asp-671 and Asp-736 together coordinate Mg(2+). 3 disordered regions span residues 956–1087 (SKAV…ETEK), 1092–1111 (RSPS…NIVP), and 1130–1187 (DLPL…DNET). Low complexity predominate over residues 960 to 969 (SPTDSTPPST). Positions 1005 to 1015 (STPQISNIEST) are enriched in polar residues. Over residues 1038–1053 (ESSHASKSKDFRHSDS) the composition is skewed to basic and acidic residues. Composition is skewed to polar residues over residues 1054–1082 (YSEN…QISD) and 1101–1111 (PENNSSHNIVP). The Bipartite nuclear localization signal motif lies at 1178 to 1212 (KKRSLEDNETEIKVSRDTWNTKNMRSLEPPRSKKR). Residues 1338-1476 (NNYYITQLDI…DILGLEIKYQ (139 aa)) enclose the Reverse transcriptase Ty1/copia-type domain. Mg(2+) is bound by residues Asp-1346, Asp-1427, Asp-1428, Asp-1610, Glu-1652, and Asp-1685. In terms of domain architecture, RNase H Ty1/copia-type spans 1610–1752 (DASYGNQPYY…IKTFKLLTNK (143 aa)).

As to quaternary structure, the capsid protein forms a homotrimer, from which the VLPs are assembled. The protease is a homodimer, whose active site consists of two apposed aspartic acid residues. In terms of processing, initially, virus-like particles (VLPs) are composed of the structural unprocessed proteins Gag and Gag-Pol, and also contain the host initiator methionine tRNA (tRNA(i)-Met) which serves as a primer for minus-strand DNA synthesis, and a dimer of genomic Ty RNA. Processing of the polyproteins occurs within the particle and proceeds by an ordered pathway, called maturation. First, the protease (PR) is released by autocatalytic cleavage of the Gag-Pol polyprotein yielding capsid protein p45 and a Pol-p154 precursor protein. This cleavage is a prerequisite for subsequent processing of Pol-p154 at the remaining sites to release the mature structural and catalytic proteins. Maturation takes place prior to the RT reaction and is required to produce transposition-competent VLPs.

Its subcellular location is the cytoplasm. It localises to the nucleus. It catalyses the reaction DNA(n) + a 2'-deoxyribonucleoside 5'-triphosphate = DNA(n+1) + diphosphate. It carries out the reaction Endonucleolytic cleavage to 5'-phosphomonoester.. In terms of biological role, capsid protein (CA) is the structural component of the virus-like particle (VLP), forming the shell that encapsulates the retrotransposons dimeric RNA genome. The particles are assembled from trimer-clustered units and there are holes in the capsid shells that allow for the diffusion of macromolecules. CA also has nucleocapsid-like chaperone activity, promoting primer tRNA(i)-Met annealing to the multipartite primer-binding site (PBS), dimerization of Ty1 RNA and initiation of reverse transcription. Functionally, the aspartyl protease (PR) mediates the proteolytic cleavages of the Gag and Gag-Pol polyproteins after assembly of the VLP. Its function is as follows. Reverse transcriptase/ribonuclease H (RT) is a multifunctional enzyme that catalyzes the conversion of the retro-elements RNA genome into dsDNA within the VLP. The enzyme displays a DNA polymerase activity that can copy either DNA or RNA templates, and a ribonuclease H (RNase H) activity that cleaves the RNA strand of RNA-DNA heteroduplexes during plus-strand synthesis and hydrolyzes RNA primers. The conversion leads to a linear dsDNA copy of the retrotransposon that includes long terminal repeats (LTRs) at both ends. Integrase (IN) targets the VLP to the nucleus, where a subparticle preintegration complex (PIC) containing at least integrase and the newly synthesized dsDNA copy of the retrotransposon must transit the nuclear membrane. Once in the nucleus, integrase performs the integration of the dsDNA into the host genome. The protein is Transposon Ty1-LR2 Gag-Pol polyprotein (TY1B-LR2) of Saccharomyces cerevisiae (strain ATCC 204508 / S288c) (Baker's yeast).